The chain runs to 171 residues: Large ribosomal subunit protein uL10 (171 aa).

This sequence belongs to the universal ribosomal protein uL10 family. In terms of assembly, part of the ribosomal stalk of the 50S ribosomal subunit. The N-terminus interacts with L11 and the large rRNA to form the base of the stalk. The C-terminus forms an elongated spine to which L12 dimers bind in a sequential fashion forming a multimeric L10(L12)X complex.

Its function is as follows. Forms part of the ribosomal stalk, playing a central role in the interaction of the ribosome with GTP-bound translation factors. This is Large ribosomal subunit protein uL10 from Corynebacterium efficiens (strain DSM 44549 / YS-314 / AJ 12310 / JCM 11189 / NBRC 100395).